We begin with the raw amino-acid sequence, 431 residues long: Protein S-Myc (431 aa).

Tyr36 is modified (phosphotyrosine; by Tyr-kinases). The 53-residue stretch at 348–400 (ERRRNHNRMERQRRDIMRSSFLNLRDLVPELVHNEKAAKVVILKKATEYIHTL) folds into the bHLH domain. The interval 400 to 421 (LQADESKLLVERKKLYERQQQL) is leucine-zipper.

In terms of assembly, efficient DNA binding requires dimerization with another bHLH protein.

The protein resides in the nucleus. Functionally, has apoptosis-inducing activity. This chain is Protein S-Myc (Mycs), found in Mus musculus (Mouse).